Reading from the N-terminus, the 289-residue chain is Myoblast determination protein 1 homolog A (289 aa).

One can recognise a bHLH domain in the interval 95–146 (DRRKAATMRERRRLSKVNEAFETLKRYTSTNPNQRLPKVEILRNAIRYIESL). The segment at 165-212 (SGDSDASSPRSNCSDGMMDYNSPPCGSRRRNSYDSSFYSDSPNDSRLG) is disordered. Composition is skewed to polar residues over residues 168-178 (SDASSPRSNCS) and 197-208 (YDSSFYSDSPND).

In terms of assembly, efficient DNA binding requires dimerization with another bHLH protein.

Its subcellular location is the nucleus. Functionally, may act as a transcriptional activator that promotes transcription of muscle-specific target genes and plays a role in muscle differentiation. This chain is Myoblast determination protein 1 homolog A (myod1-a), found in Xenopus laevis (African clawed frog).